A 335-amino-acid polypeptide reads, in one-letter code: Adenosine deaminase (335 aa).

Zn(2+) is bound by residues H12 and H14. Substrate-binding residues include H14 and D16. Residue H197 participates in Zn(2+) binding. E200 serves as the catalytic Proton donor. D278 contributes to the Zn(2+) binding site.

It belongs to the metallo-dependent hydrolases superfamily. Adenosine and AMP deaminases family. Adenosine deaminase subfamily. It depends on Zn(2+) as a cofactor.

It catalyses the reaction adenosine + H2O + H(+) = inosine + NH4(+). It carries out the reaction 2'-deoxyadenosine + H2O + H(+) = 2'-deoxyinosine + NH4(+). Its function is as follows. Catalyzes the hydrolytic deamination of adenosine and 2-deoxyadenosine. This Clostridium botulinum (strain Kyoto / Type A2) protein is Adenosine deaminase.